The sequence spans 182 residues: Isopentenyl-diphosphate Delta-isomerase (182 aa).

The Mn(2+) site is built by histidine 25 and histidine 32. One can recognise a Nudix hydrolase domain in the interval 30-164 (LLHLAFSSWL…PWAFSPWMVM (135 aa)). Cysteine 67 is a catalytic residue. Histidine 69 serves as a coordination point for Mn(2+). Mg(2+) is bound at residue glutamate 87. Residues glutamate 114 and glutamate 116 each contribute to the Mn(2+) site. Glutamate 116 is a catalytic residue.

The protein belongs to the IPP isomerase type 1 family. Homodimer. Mg(2+) serves as cofactor. The cofactor is Mn(2+).

It localises to the cytoplasm. It carries out the reaction isopentenyl diphosphate = dimethylallyl diphosphate. It functions in the pathway isoprenoid biosynthesis; dimethylallyl diphosphate biosynthesis; dimethylallyl diphosphate from isopentenyl diphosphate: step 1/1. Catalyzes the 1,3-allylic rearrangement of the homoallylic substrate isopentenyl (IPP) to its highly electrophilic allylic isomer, dimethylallyl diphosphate (DMAPP). This Escherichia coli (strain ATCC 8739 / DSM 1576 / NBRC 3972 / NCIMB 8545 / WDCM 00012 / Crooks) protein is Isopentenyl-diphosphate Delta-isomerase.